Reading from the N-terminus, the 278-residue chain is Energy-coupling factor transporter ATP-binding protein EcfA1 (278 aa).

An ABC transporter domain is found at 5–239 (LLLESVSYQY…QDKLEAAGID (235 aa)). 39–46 (GPNGSGKS) provides a ligand contact to ATP.

It belongs to the ABC transporter superfamily. Energy-coupling factor EcfA family. As to quaternary structure, forms a stable energy-coupling factor (ECF) transporter complex composed of 2 membrane-embedded substrate-binding proteins (S component), 2 ATP-binding proteins (A component) and 2 transmembrane proteins (T component).

The protein resides in the cell membrane. ATP-binding (A) component of a common energy-coupling factor (ECF) ABC-transporter complex. Unlike classic ABC transporters this ECF transporter provides the energy necessary to transport a number of different substrates. This is Energy-coupling factor transporter ATP-binding protein EcfA1 from Halalkalibacterium halodurans (strain ATCC BAA-125 / DSM 18197 / FERM 7344 / JCM 9153 / C-125) (Bacillus halodurans).